A 1400-amino-acid polypeptide reads, in one-letter code: DNA-directed RNA polymerase subunit beta' (1400 aa).

4 residues coordinate Zn(2+): cysteine 70, cysteine 72, cysteine 85, and cysteine 88. Mg(2+)-binding residues include aspartate 460, aspartate 462, and aspartate 464. Cysteine 814, cysteine 889, cysteine 896, and cysteine 899 together coordinate Zn(2+).

It belongs to the RNA polymerase beta' chain family. As to quaternary structure, the RNAP catalytic core consists of 2 alpha, 1 beta, 1 beta' and 1 omega subunit. When a sigma factor is associated with the core the holoenzyme is formed, which can initiate transcription. Mg(2+) is required as a cofactor. It depends on Zn(2+) as a cofactor.

The enzyme catalyses RNA(n) + a ribonucleoside 5'-triphosphate = RNA(n+1) + diphosphate. In terms of biological role, DNA-dependent RNA polymerase catalyzes the transcription of DNA into RNA using the four ribonucleoside triphosphates as substrates. The polypeptide is DNA-directed RNA polymerase subunit beta' (Alcanivorax borkumensis (strain ATCC 700651 / DSM 11573 / NCIMB 13689 / SK2)).